A 557-amino-acid polypeptide reads, in one-letter code: uncharacterized protein (557 aa).

The first 30 residues, 1 to 30 (MAPRRRRHTRIAGLRVVGTATLVAATTLTA), serve as a signal peptide directing secretion. A lipid anchor (N-palmitoyl cysteine) is attached at C31. Residue C31 is the site of S-diacylglycerol cysteine attachment.

To M.bovis Mb2616c and M.leprae ML0489.

The protein resides in the cell membrane. This is an uncharacterized protein from Mycobacterium tuberculosis (strain ATCC 25618 / H37Rv).